The chain runs to 761 residues: Xaa-Pro dipeptidyl-peptidase (761 aa).

Active-site charge relay system residues include serine 349, aspartate 469, and histidine 499.

The protein belongs to the peptidase S15 family. As to quaternary structure, homodimer.

The protein resides in the cytoplasm. It catalyses the reaction Hydrolyzes Xaa-Pro-|- bonds to release unblocked, N-terminal dipeptides from substrates including Ala-Pro-|-p-nitroanilide and (sequentially) Tyr-Pro-|-Phe-Pro-|-Gly-Pro-|-Ile.. Functionally, removes N-terminal dipeptides sequentially from polypeptides having unsubstituted N-termini provided that the penultimate residue is proline. In Streptococcus equi subsp. equi (strain 4047), this protein is Xaa-Pro dipeptidyl-peptidase.